A 72-amino-acid chain; its full sequence is Delta-actitoxin-Avd2b 3 (72 aa).

The signal sequence occupies residues 1–21 (MMSRLLVFLMLGAAFMLVVSA). The propeptide occupies 22–42 (NDAYGDEPAFKDLNQGDESLG). 3 disulfide bridges follow: cysteine 47/cysteine 62, cysteine 48/cysteine 56, and cysteine 50/cysteine 67.

This sequence belongs to the sea anemone short toxin (type III) family.

The protein localises to the secreted. The protein resides in the nematocyst. Its function is as follows. Voltage-gated sodium channel (Nav) inhibitor. 1 uM completely inhibits insect voltage-gated sodium channel inactivation (DmNav1 from D.melanogaster). In Anemonia viridis (Snakelocks anemone), this protein is Delta-actitoxin-Avd2b 3.